The sequence spans 78 residues: 4-methyl-3-hydroxyanthranilic acid carrier protein (78 aa).

Ser33 is subject to O-(pantetheine 4'-phosphoryl)serine.

Belongs to the acyl carrier protein (ACP) family. 4'-phosphopantetheine is transferred from CoA to a specific serine of the apo-form of this carrier protein.

It functions in the pathway antibiotic biosynthesis. Its function is as follows. Involved in the biosynthesis of actinomycin. Acts as a carrier in the transfer and thioesterification of 4-methyl-3-hydroxyanthranilic acid (4-MHA). In Streptomyces anulatus (Streptomyces chrysomallus), this protein is 4-methyl-3-hydroxyanthranilic acid carrier protein.